The sequence spans 437 residues: MDKHKVKRQRLDRICDGIRPPILNGPMPVRPLVALLDGRDCTIEMPILKDVATVAFCDAQSTQEIHEKVLSEAVGALMYHTITLSREDLEKFKALRIIIKIGSGYDNIDIKSAAELGIAVCNIPSASVEETADSTLCHILNLYRRVTWLHQAMREGNRPASVEQIREVAGGAARIRGETLGIIGLGRIGQAVALRAKAFNFTVIFYDPYLADGVERSLGLQRMATLQELLMHSDCITLHCNLNEHNHHLINDFTIKQMRQGCFLVNTARGGLVDEKALAQALKDGRIRGAALDVHESEPFSFSQGPLKDAPNLICTPHTAWYSEHASIEAREEAAKEIRRAIAGPIPDSLRNCVNKDYLLAAVQWSGMEQAAVHPELNGASSYRFPPGVVGVTSAGHPSAIEGLVASSHPLIPSVSHTPSPGQTTKPDPDREIPTDQ.

NAD(+)-binding positions include S103, 183–188 (IGLGRI), D207, 240–246 (CNLNEHN), 267–269 (TAR), and D293. R269 is an active-site residue. Residue E298 is part of the active site. The active-site Proton donor is H318. 318–321 (HTAW) is a binding site for NAD(+). A disordered region spans residues 410-437 (PLIPSVSHTPSPGQTTKPDPDREIPTDQ). Over residues 415-426 (VSHTPSPGQTTK) the composition is skewed to polar residues. Residues 427–437 (PDPDREIPTDQ) are compositionally biased toward basic and acidic residues.

The protein belongs to the D-isomer specific 2-hydroxyacid dehydrogenase family. In terms of assembly, interacts with the C-terminus of tcf7l1-a via the consensus motifs P-X-[DNS]-L-[STVA].

Its subcellular location is the nucleus. Corepressor targeting diverse transcription regulators. The sequence is that of C-terminal-binding protein 2 (ctbp2) from Xenopus laevis (African clawed frog).